The sequence spans 539 residues: T-complex protein 1 subunit zeta (539 aa).

It belongs to the TCP-1 chaperonin family. As to quaternary structure, heterooligomeric complex of about 850 to 900 kDa that forms two stacked rings, 12 to 16 nm in diameter.

The protein resides in the cytoplasm. In terms of biological role, molecular chaperone; assists the folding of proteins upon ATP hydrolysis. Known to play a role, in vitro, in the folding of actin and tubulin. The chain is T-complex protein 1 subunit zeta (cct-6) from Caenorhabditis elegans.